Consider the following 126-residue polypeptide: Urease subunit beta (126 aa).

This sequence belongs to the urease beta subunit family. In terms of assembly, heterotrimer of UreA (gamma), UreB (beta) and UreC (alpha) subunits. Three heterotrimers associate to form the active enzyme.

The protein resides in the cytoplasm. The enzyme catalyses urea + 2 H2O + H(+) = hydrogencarbonate + 2 NH4(+). It participates in nitrogen metabolism; urea degradation; CO(2) and NH(3) from urea (urease route): step 1/1. In Gloeothece citriformis (strain PCC 7424) (Cyanothece sp. (strain PCC 7424)), this protein is Urease subunit beta.